The sequence spans 531 residues: Berberine bridge enzyme-like 9 (531 aa).

Positions 1-23 (MTSLTTQTLIITIFLLTIPTSFA) are cleaved as a signal peptide. A disulfide bridge links cysteine 35 with cysteine 99. Residues asparagine 76, asparagine 164, asparagine 271, asparagine 300, asparagine 314, asparagine 400, and asparagine 485 are each glycosylated (N-linked (GlcNAc...) asparagine). In terms of domain architecture, FAD-binding PCMH-type spans 77 to 252 (MTRKPVAIVA…LAWKIKLVPV (176 aa)). Positions 114–177 (HDYDGMSYLS…DLRGFPAGIC (64 aa)) form a cross-link, 6-(S-cysteinyl)-8alpha-(pros-histidyl)-FAD (His-Cys).

The protein belongs to the oxygen-dependent FAD-linked oxidoreductase family. The cofactor is FAD. Post-translationally, the FAD cofactor is bound via a bicovalent 6-S-cysteinyl, 8alpha-N1-histidyl FAD linkage. In terms of tissue distribution, accumulates in cell walls of etiolated hypocotyls.

The protein localises to the secreted. It localises to the cell wall. The chain is Berberine bridge enzyme-like 9 from Arabidopsis thaliana (Mouse-ear cress).